A 235-amino-acid chain; its full sequence is Aspartate/glutamate leucyltransferase (235 aa).

Belongs to the R-transferase family. Bpt subfamily.

The protein resides in the cytoplasm. The enzyme catalyses N-terminal L-glutamyl-[protein] + L-leucyl-tRNA(Leu) = N-terminal L-leucyl-L-glutamyl-[protein] + tRNA(Leu) + H(+). It carries out the reaction N-terminal L-aspartyl-[protein] + L-leucyl-tRNA(Leu) = N-terminal L-leucyl-L-aspartyl-[protein] + tRNA(Leu) + H(+). Its function is as follows. Functions in the N-end rule pathway of protein degradation where it conjugates Leu from its aminoacyl-tRNA to the N-termini of proteins containing an N-terminal aspartate or glutamate. This chain is Aspartate/glutamate leucyltransferase, found in Stutzerimonas stutzeri (strain A1501) (Pseudomonas stutzeri).